We begin with the raw amino-acid sequence, 669 residues long: Glutaminase kidney isoform, mitochondrial (669 aa).

A mitochondrion-targeting transit peptide spans 1-54; it reads MMRLRGSGMLRDLLLRSPAGVSATLRRAQPLVTLCRRPRGGGRPAAGPAAAARL. A disordered region spans residues 68–118; sequence LARGLSSSPSEILQELGKGSTHPQPGVSPPAAPAAPGPKDGPGETDAFGNS. The span at 93-103 shows a compositional bias: pro residues; the sequence is GVSPPAAPAAP. N6-succinyllysine occurs at positions 130 and 164. Residue Ser286 coordinates substrate. Lys311 bears the N6-acetyllysine mark. Residues 315 to 322 form a highly mobile activation loop region; that stretch reads GLRFNKLF. Substrate is bound by residues Asn335, Glu381, Asn388, Tyr414, Tyr466, and Val484. ANK repeat units lie at residues 585-614 and 619-648; these read DSRTALHVAAAEGHVEVVKFLLEACKVNPF and WNNTPMDEALHFGHHDVFKILQEYQVQYTP. Residues 647 to 669 form a disordered region; sequence TPQGDSDNGKENQTVHKNLDGLL. The residue at position 652 (Ser652) is a Phosphoserine. The segment covering 653-669 has biased composition (basic and acidic residues); sequence DNGKENQTVHKNLDGLL.

It belongs to the glutaminase family. Homotetramer, dimer of dimers. The tetramers can assemble into rod-like oligomers (in vitro), but the physiological significance of this is not clear. Interacts with RAF1 and MAP2K2. Interacts with ATCAY; the interaction is direct and may control GLS localization, negatively regulating its activity. Synthesized as a 74-kDa cytosolic precursor which is proteolytically processed by the mitochondrial-processing peptidase (MPP) via a 72-kDa intermediate to yield the mature mitochondrial 68- and 65-kDa subunits. In terms of tissue distribution, isoform 1 and isoform 3 are detected in brain cortex. Isoform 3 is highly expressed in astrocytoma, ganglioglioma and ependymoma. Isoform 1 is highly expressed in brain and kidney, but not detected in liver. Isoform 3 is highly expressed in heart and pancreas, detected at lower levels in placenta, lung, pancreas and kidney, but is not detected in liver. Isoform 2 is expressed in cardiac and skeletal muscle.

The protein localises to the mitochondrion. It localises to the cytoplasm. It is found in the cytosol. The protein resides in the mitochondrion matrix. It catalyses the reaction L-glutamine + H2O = L-glutamate + NH4(+). With respect to regulation, isoform 1 and isoform 3 are activated by phosphate. Inhibited by BPTES. BPTES binds between subunits and favors dissociation of the tetramer into dimers. Inhibited by 6-diazo-5-oxo-L-norleucine (DON). Enzyme activity is stimulated by phosphorylation. Its function is as follows. Catalyzes the first reaction in the primary pathway for the renal catabolism of glutamine. Plays a role in maintaining acid-base homeostasis. Regulates the levels of the neurotransmitter glutamate, the main excitatory neurotransmitter in the brain. Functionally, lacks catalytic activity. The protein is Glutaminase kidney isoform, mitochondrial (GLS) of Homo sapiens (Human).